The primary structure comprises 584 residues: Aspartate--tRNA(Asp/Asn) ligase (584 aa).

An L-aspartate-binding site is contributed by glutamate 173. The tract at residues 197-200 is aspartate; that stretch reads QLFK. Residue arginine 219 coordinates L-aspartate. ATP-binding positions include 219-221 and glutamine 228; that span reads RDE. Histidine 447 contributes to the L-aspartate binding site. Glutamate 477 lines the ATP pocket. An L-aspartate-binding site is contributed by arginine 484. Residue 529–532 coordinates ATP; sequence GFDR.

This sequence belongs to the class-II aminoacyl-tRNA synthetase family. Type 1 subfamily. As to quaternary structure, homodimer.

It localises to the cytoplasm. It catalyses the reaction tRNA(Asx) + L-aspartate + ATP = L-aspartyl-tRNA(Asx) + AMP + diphosphate. In terms of biological role, aspartyl-tRNA synthetase with relaxed tRNA specificity since it is able to aspartylate not only its cognate tRNA(Asp) but also tRNA(Asn). Reaction proceeds in two steps: L-aspartate is first activated by ATP to form Asp-AMP and then transferred to the acceptor end of tRNA(Asp/Asn). The sequence is that of Aspartate--tRNA(Asp/Asn) ligase from Campylobacter hominis (strain ATCC BAA-381 / DSM 21671 / CCUG 45161 / LMG 19568 / NCTC 13146 / CH001A).